Reading from the N-terminus, the 385-residue chain is Glucans biosynthesis protein C (385 aa).

A run of 10 helical transmembrane segments spans residues 17-37 (AWLM…SHTW), 60-80 (MQVF…RYPL), 91-111 (VGIP…IMLQ), 137-157 (ISHL…VWIF), 173-193 (KFSM…YAVI), 212-232 (FIVM…LAFI), 239-259 (LFTT…VAYL), 274-294 (TESV…FSFG), 311-331 (ASLF…AYIT), and 338-358 (WLGF…LYEI).

It belongs to the acyltransferase 3 family. OpgC subfamily.

The protein localises to the cell membrane. The protein operates within glycan metabolism; osmoregulated periplasmic glucan (OPG) biosynthesis. In terms of biological role, necessary for the succinyl substitution of periplasmic glucans. Could catalyze the transfer of succinyl residues from the cytoplasmic side of the membrane to the nascent glucan backbones on the periplasmic side of the membrane. The chain is Glucans biosynthesis protein C from Escherichia coli O139:H28 (strain E24377A / ETEC).